Reading from the N-terminus, the 1194-residue chain is DNA polymerase catalytic subunit (1194 aa).

It belongs to the DNA polymerase type-B family. As to quaternary structure, forms a complex with the ssDNA-binding protein, the DNA polymerase processivity factor, and the alkaline exonuclease. Interacts with the helicase-primase complex composed of the primase, the helicase and the primase-associated factor; this interaction may coordinate leading and lagging strand DNA synthesis at the replication fork.

It is found in the host nucleus. It carries out the reaction DNA(n) + a 2'-deoxyribonucleoside 5'-triphosphate = DNA(n+1) + diphosphate. It catalyses the reaction Endonucleolytic cleavage to 5'-phosphomonoester.. Its function is as follows. Replicates viral genomic DNA. The replication complex is composed of six viral proteins: the DNA polymerase, processivity factor, primase, primase-associated factor, helicase, and ssDNA-binding protein. Additionally, the polymerase contains an intrinsic ribonuclease H (RNase H) activity that specifically degrades RNA/DNA heteroduplexes or duplex DNA substrates in the 5' to 3' direction. Therefore, it can catalyze the excision of the RNA primers that initiate the synthesis of Okazaki fragments at a replication fork during viral DNA replication. In Varicella-zoster virus (strain Dumas) (HHV-3), this protein is DNA polymerase catalytic subunit.